The chain runs to 380 residues: Tubulin-like protein CetZ (380 aa).

GTP-binding positions include Q10–K14, G103–G105, E136, N163, and N181. A disordered region spans residues P359–R380.

The protein belongs to the CetZ family.

The protein resides in the cytoplasm. In terms of biological role, involved in cell shape control. The chain is Tubulin-like protein CetZ from Thermococcus kodakarensis (strain ATCC BAA-918 / JCM 12380 / KOD1) (Pyrococcus kodakaraensis (strain KOD1)).